We begin with the raw amino-acid sequence, 344 residues long: Rho guanine nucleotide exchange factor 39 (344 aa).

A DH domain is found at K22–I197. In terms of domain architecture, PH spans W227–R331.

Its subcellular location is the cell membrane. Its function is as follows. Promotes cell proliferation. The chain is Rho guanine nucleotide exchange factor 39 (Arhgef39) from Mus musculus (Mouse).